The primary structure comprises 350 residues: Protein FAM118B (350 aa).

Residue Ala2 is modified to N-acetylalanine. A Phosphoserine modification is found at Ser9. The interval 330–350 is disordered; that stretch reads AREGQLNGSSAAHGEIRGCST.

It belongs to the FAM118 family.

It localises to the nucleus. Its subcellular location is the cajal body. Functionally, may play a role in Cajal bodies formation. This chain is Protein FAM118B (Fam118b), found in Rattus norvegicus (Rat).